The following is a 149-amino-acid chain: Ribonuclease pancreatic (149 aa).

Residues 1-25 (MGLEKSLILFPLFVLLLGWVQPSLG) form the signal peptide. A disordered region spans residues 30 to 49 (AQKFERQHMDSSGSSNNSPT). Substrate-binding residues include Lys32 and Arg35. Catalysis depends on His37, which acts as the Proton acceptor. Over residues 39–49 (DSSGSSNNSPT) the composition is skewed to polar residues. Cystine bridges form between Cys51–Cys109, Cys65–Cys120, Cys83–Cys135, and Cys90–Cys97. Residue 66-70 (KPVNT) coordinates substrate. Asn87 is a glycosylation site (N-linked (GlcNAc...) asparagine). Lys91 provides a ligand contact to substrate. His144 (proton donor) is an active-site residue.

The protein belongs to the pancreatic ribonuclease family. As to quaternary structure, monomer. Interacts with and forms tight 1:1 complexes with RNH1. Dimerization of two such complexes may occur. Interaction with RNH1 inhibits this protein. As to expression, pancreas.

It localises to the secreted. The catalysed reaction is an [RNA] containing cytidine + H2O = an [RNA]-3'-cytidine-3'-phosphate + a 5'-hydroxy-ribonucleotide-3'-[RNA].. It carries out the reaction an [RNA] containing uridine + H2O = an [RNA]-3'-uridine-3'-phosphate + a 5'-hydroxy-ribonucleotide-3'-[RNA].. In terms of biological role, endonuclease that catalyzes the cleavage of RNA on the 3' side of pyrimidine nucleotides. Acts on single-stranded and double-stranded RNA. This is Ribonuclease pancreatic (Rnase1) from Mus pahari (Gairdner's shrew-mouse).